Here is a 394-residue protein sequence, read N- to C-terminus: Glycogen synthase kinase 1 (394 aa).

In terms of domain architecture, Protein kinase spans Tyr-35–Phe-318. ATP is bound by residues Val-41–Val-49 and Lys-64.

This sequence belongs to the protein kinase superfamily. CMGC Ser/Thr protein kinase family. GSK-3 subfamily.

The protein resides in the cytoplasm. The enzyme catalyses L-seryl-[protein] + ATP = O-phospho-L-seryl-[protein] + ADP + H(+). Protein kinase that acts downstream of the MPS1 MAPK cascade as a highly conservative signal modulator that dictates growth, conidiation and pathogenicity. Phosphorylates HAT1 at 'Ser-8' to block its translocation from the nucleus to the cytoplasm where HAT1 positively regulates appressorium development and pathogenicity. The chain is Glycogen synthase kinase 1 from Pyricularia oryzae (Rice blast fungus).